Reading from the N-terminus, the 76-residue chain is uncharacterized protein (76 aa).

This sequence to K.pneumoniae LtrA, E.coli YjiE, and YhcS.

This is an uncharacterized protein from Escherichia coli O6:H1 (strain CFT073 / ATCC 700928 / UPEC).